The primary structure comprises 337 residues: GTPase Obg (337 aa).

The Obg domain maps to 1–159 (MKFVDSATIS…FELEMELKLM (159 aa)). The OBG-type G domain maps to 160–322 (ADVGLVGFPN…LKDELWRQVS (163 aa)). GTP is bound by residues 166–173 (GFPNAGKS), 191–195 (FTTLV), 213–216 (DIPG), 280–283 (TKMD), and 303–305 (SSV). Positions 173 and 193 each coordinate Mg(2+).

This sequence belongs to the TRAFAC class OBG-HflX-like GTPase superfamily. OBG GTPase family. In terms of assembly, monomer. The cofactor is Mg(2+).

The protein resides in the cytoplasm. An essential GTPase which binds GTP, GDP and possibly (p)ppGpp with moderate affinity, with high nucleotide exchange rates and a fairly low GTP hydrolysis rate. Plays a role in control of the cell cycle, stress response, ribosome biogenesis and in those bacteria that undergo differentiation, in morphogenesis control. This is GTPase Obg from Chlorobium phaeobacteroides (strain DSM 266 / SMG 266 / 2430).